The following is a 410-amino-acid chain: Dihydrolipoyllysine-residue acetyltransferase component of pyruvate dehydrogenase complex (410 aa).

Positions M1–N69 constitute a Lipoyl-binding domain. Residue K35 is modified to N6-lipoyllysine. The tract at residues S81–N100 is disordered. Residues H113–K150 form the Peripheral subunit-binding (PSBD) domain. H383 is an active-site residue.

It belongs to the 2-oxoacid dehydrogenase family. As to quaternary structure, forms a 24-polypeptide structural core with octahedral symmetry. It depends on (R)-lipoate as a cofactor.

It carries out the reaction N(6)-[(R)-dihydrolipoyl]-L-lysyl-[protein] + acetyl-CoA = N(6)-[(R)-S(8)-acetyldihydrolipoyl]-L-lysyl-[protein] + CoA. Its function is as follows. The pyruvate dehydrogenase complex catalyzes the overall conversion of pyruvate to acetyl-CoA and CO(2). It contains multiple copies of three enzymatic components: pyruvate dehydrogenase (E1), dihydrolipoamide acetyltransferase (E2) and lipoamide dehydrogenase (E3). This Buchnera aphidicola subsp. Baizongia pistaciae (strain Bp) protein is Dihydrolipoyllysine-residue acetyltransferase component of pyruvate dehydrogenase complex (aceF).